The primary structure comprises 215 residues: Eukaryotic translation initiation factor 4E-1A (215 aa).

Positions 1 to 14 are enriched in low complexity; sequence MATAEPETSTNPSN. Positions 1 to 23 are disordered; the sequence is MATAEPETSTNPSNSEEKNEENE. Residues 54 to 55, 100 to 101, 155 to 160, and 203 to 205 contribute to the mRNA site; these read WQ, WE, RTKGDK, and TKS.

This sequence belongs to the eukaryotic initiation factor 4E family. Interacts with eif4ebp3l. In terms of tissue distribution, expressed in all tissues examined, including gill, fin, heart, intestine, muscle, ovary and testis.

The protein localises to the cytoplasm. It is found in the nucleus. Recognizes and binds the 7-methylguanosine (m7G)-containing mRNA cap during an early step in the initiation of protein synthesis and facilitates ribosome binding by inducing the unwinding of the mRNAs secondary structures. Also promotes export of a subset of mRNAs from the nucleus to the cytoplasm. The sequence is that of Eukaryotic translation initiation factor 4E-1A from Danio rerio (Zebrafish).